A 356-amino-acid chain; its full sequence is Probable dual-specificity RNA methyltransferase RlmN (356 aa).

Glu-92 (proton acceptor) is an active-site residue. Residues 98-336 (HKYGFSVCVT…CGVRLEHGTD (239 aa)) enclose the Radical SAM core domain. Cysteines 105 and 341 form a disulfide. Residues Cys-112, Cys-116, and Cys-119 each contribute to the [4Fe-4S] cluster site. S-adenosyl-L-methionine contacts are provided by residues 164-165 (GE), Ser-196, 219-221 (SLH), and Asn-297. The active-site S-methylcysteine intermediate is the Cys-341.

This sequence belongs to the radical SAM superfamily. RlmN family. [4Fe-4S] cluster serves as cofactor.

It localises to the cytoplasm. It catalyses the reaction adenosine(2503) in 23S rRNA + 2 reduced [2Fe-2S]-[ferredoxin] + 2 S-adenosyl-L-methionine = 2-methyladenosine(2503) in 23S rRNA + 5'-deoxyadenosine + L-methionine + 2 oxidized [2Fe-2S]-[ferredoxin] + S-adenosyl-L-homocysteine. The catalysed reaction is adenosine(37) in tRNA + 2 reduced [2Fe-2S]-[ferredoxin] + 2 S-adenosyl-L-methionine = 2-methyladenosine(37) in tRNA + 5'-deoxyadenosine + L-methionine + 2 oxidized [2Fe-2S]-[ferredoxin] + S-adenosyl-L-homocysteine. In terms of biological role, specifically methylates position 2 of adenine 2503 in 23S rRNA and position 2 of adenine 37 in tRNAs. In Shouchella clausii (strain KSM-K16) (Alkalihalobacillus clausii), this protein is Probable dual-specificity RNA methyltransferase RlmN.